Here is a 429-residue protein sequence, read N- to C-terminus: Alpha-L-rhamnosidase rgxB (429 aa).

The first 20 residues, 1–20, serve as a signal peptide directing secretion; that stretch reads MAPIALKILLFTSLIVPSIS. 7 N-linked (GlcNAc...) asparagine glycosylation sites follow: asparagine 67, asparagine 77, asparagine 97, asparagine 103, asparagine 112, asparagine 135, and asparagine 219. A PbH1 1 repeat occupies 217–238; that stretch reads SKNITLTNWEVVNGDDSISTKA. Aspartate 231 serves as the catalytic Proton donor. N-linked (GlcNAc...) asparagine glycans are attached at residues asparagine 239, asparagine 247, asparagine 278, and asparagine 344. PbH1 repeat units lie at residues 240–260 and 271–292; these read STDI…AIGS and VERL…YFKT. The cysteines at positions 374 and 380 are disulfide-linked. N-linked (GlcNAc...) asparagine glycosylation is found at asparagine 387, asparagine 395, and asparagine 414.

This sequence belongs to the glycosyl hydrolase 28 family.

It is found in the secreted. The catalysed reaction is Hydrolysis of terminal non-reducing alpha-L-rhamnose residues in alpha-L-rhamnosides.. Functionally, alpha-L-rhamnosidase which is able to degrade p-nitrophenyl-alpha-L-rhamnopyranoside (pnp_Rha). The natural substrate of this enzyme has not been identified yet. In Aspergillus niger (strain ATCC MYA-4892 / CBS 513.88 / FGSC A1513), this protein is Alpha-L-rhamnosidase rgxB (rgxB).